A 569-amino-acid polypeptide reads, in one-letter code: Sulfite reductase [NADPH] hemoprotein beta-component (569 aa).

Residues Cys434, Cys440, Cys479, and Cys483 each coordinate [4Fe-4S] cluster. Siroheme is bound at residue Cys483.

It belongs to the nitrite and sulfite reductase 4Fe-4S domain family. As to quaternary structure, alpha(8)-beta(8). The alpha component is a flavoprotein, the beta component is a hemoprotein. Requires siroheme as cofactor. [4Fe-4S] cluster is required as a cofactor.

The catalysed reaction is hydrogen sulfide + 3 NADP(+) + 3 H2O = sulfite + 3 NADPH + 4 H(+). Its pathway is sulfur metabolism; hydrogen sulfide biosynthesis; hydrogen sulfide from sulfite (NADPH route): step 1/1. In terms of biological role, component of the sulfite reductase complex that catalyzes the 6-electron reduction of sulfite to sulfide. This is one of several activities required for the biosynthesis of L-cysteine from sulfate. The sequence is that of Sulfite reductase [NADPH] hemoprotein beta-component from Staphylococcus saprophyticus subsp. saprophyticus (strain ATCC 15305 / DSM 20229 / NCIMB 8711 / NCTC 7292 / S-41).